We begin with the raw amino-acid sequence, 167 residues long: Sperm acrosome membrane-associated protein 3 (167 aa).

Topologically, residues 1 to 63 are cytoplasmic; the sequence is MVSALREAPL…EARSRALRRR (63 aa). The chain crosses the membrane as a helical; Signal-anchor for type II membrane protein span at residues 64-84; that stretch reads WCPAGIILLALISLLSCLLPA. At 85–167 the chain is on the extracellular side; that stretch reads SEAKVYGRCE…VPNVCQMYCS (83 aa). The C-type lysozyme domain occupies 88 to 167; the sequence is KVYGRCELAR…VPNVCQMYCS (80 aa). A disulfide bond links C151 and C166.

The protein belongs to the glycosyl hydrolase 22 family. As to quaternary structure, interacts with ASTL. In terms of processing, the processed form derives from the membrane form by proteolytic processing.

Its subcellular location is the cytoplasmic vesicle. It is found in the secretory vesicle. It localises to the acrosome membrane. Its function is as follows. Sperm surface membrane protein that may be involved in sperm-egg plasma membrane adhesion and fusion during fertilization. It could be a potential receptor for the egg oligosaccharide residue N-acetylglucosamine, which is present in the extracellular matrix over the egg plasma membrane. The processed form has no detectable bacteriolytic activity in vitro. The polypeptide is Sperm acrosome membrane-associated protein 3 (SPACA3) (Pongo pygmaeus (Bornean orangutan)).